The primary structure comprises 228 residues: uncharacterized protein (228 aa).

6 helical membrane-spanning segments follow: residues 14-34 (GWYI…MWLI), 53-73 (FLII…VLIV), 108-128 (GLTF…FFWL), 148-168 (AVKM…PIFF), 178-198 (TIIS…GFSI), and 200-220 (SVVY…YMAI).

The protein localises to the cell membrane. This is an uncharacterized protein from Bacillus subtilis (strain 168).